The chain runs to 215 residues: Pyrrolidone-carboxylate peptidase (215 aa).

Residues Glu78, Cys141, and His165 contribute to the active site.

This sequence belongs to the peptidase C15 family. In terms of assembly, homotetramer.

It localises to the cytoplasm. It carries out the reaction Release of an N-terminal pyroglutamyl group from a polypeptide, the second amino acid generally not being Pro.. Functionally, removes 5-oxoproline from various penultimate amino acid residues except L-proline. The chain is Pyrrolidone-carboxylate peptidase (pcp) from Streptococcus pyogenes serotype M1.